Reading from the N-terminus, the 114-residue chain is MAQGKGFGFGLGKIKELQEAFQKAQQVQEGAKQLQDELEQMSIEGHSSDGSVTVVMSGNQEPRSVTIQPTALEKGAEELSTLVTEAMKDAYSKSTDTMRQKMEELTSGLNLPGL.

Belongs to the YbaB/EbfC family. As to quaternary structure, homodimer.

The protein resides in the cytoplasm. Its subcellular location is the nucleoid. Binds to DNA and alters its conformation. May be involved in regulation of gene expression, nucleoid organization and DNA protection. This is Nucleoid-associated protein PCC7424_2224 from Gloeothece citriformis (strain PCC 7424) (Cyanothece sp. (strain PCC 7424)).